The following is a 264-amino-acid chain: AA9 family lytic polysaccharide monooxygenase A (264 aa).

The first 18 residues, 1–18 (MHFAALAILSSLVASAAA), serve as a signal peptide directing secretion. His19 contacts Cu(2+). Asn51 and Asn75 each carry an N-linked (GlcNAc...) asparagine glycan. A disulfide bond links Cys59 and Cys182. Residue His96 participates in Cu(2+) binding. Asn110 carries an N-linked (GlcNAc...) asparagine glycan. O2 is bound at residue His162. Cu(2+) is bound at residue Tyr179. N-linked (GlcNAc...) asparagine glycans are attached at residues Asn218 and Asn251.

Belongs to the polysaccharide monooxygenase AA9 family. It depends on Cu(2+) as a cofactor.

Its subcellular location is the secreted. The catalysed reaction is [(1-&gt;4)-beta-D-glucosyl]n+m + reduced acceptor + O2 = 4-dehydro-beta-D-glucosyl-[(1-&gt;4)-beta-D-glucosyl]n-1 + [(1-&gt;4)-beta-D-glucosyl]m + acceptor + H2O.. In terms of biological role, lytic polysaccharide monooxygenase (LPMO) that depolymerizes crystalline and amorphous polysaccharides via the oxidation of scissile alpha- or beta-(1-4)-glycosidic bonds, yielding C4 oxidation products. Catalysis by LPMOs requires the reduction of the active-site copper from Cu(II) to Cu(I) by a reducing agent and H(2)O(2) or O(2) as a cosubstrate. Active on cellulose and cello-oligosaccharides, as well as plant cell wall-derived hemicellulosic polysaccharides. Also active on cello-oligosaccharides such as cellohexaose, cellopentaose or cellotetraose. This chain is AA9 family lytic polysaccharide monooxygenase A, found in Phanerochaete carnosa (strain HHB-10118-sp) (White-rot fungus).